The sequence spans 299 residues: Zinc finger protein 414 (299 aa).

Composition is skewed to polar residues over residues 1 to 20 and 70 to 80; these read MEEL…SSSN and SCQTSSTTRGV. The tract at residues 1–102 is disordered; sequence MEELSGPSSD…PPPGKQIPCS (102 aa). 2 C2H2-type zinc fingers span residues 99–123 and 135–159; these read IPCS…LRTH and FRCS…GKLH. The segment at 166–190 adopts a C2H2-type 3; degenerate zinc-finger fold; it reads FKCENCLLRFRTHRSLFKHLHVCID. Disordered regions lie at residues 193 to 228 and 254 to 299; these read QNPA…PFPL and PRLR…GACR. Basic and acidic residues predominate over residues 203–215; it reads LDKEPPVPERPPE. Positions 217-228 are enriched in low complexity; that stretch reads DPSSSLGLPFPL. Residues 268–285 are compositionally biased toward polar residues; the sequence is TSSTAIWKKSQGATSSPR.

This sequence belongs to the krueppel C2H2-type zinc-finger protein family.

It localises to the nucleus. Its function is as follows. May be involved in transcriptional regulation. The polypeptide is Zinc finger protein 414 (Znf414) (Rattus norvegicus (Rat)).